A 289-amino-acid polypeptide reads, in one-letter code: ATP synthase gamma chain (289 aa).

Belongs to the ATPase gamma chain family. As to quaternary structure, F-type ATPases have 2 components, CF(1) - the catalytic core - and CF(0) - the membrane proton channel. CF(1) has five subunits: alpha(3), beta(3), gamma(1), delta(1), epsilon(1). CF(0) has three main subunits: a, b and c.

It is found in the cell inner membrane. In terms of biological role, produces ATP from ADP in the presence of a proton gradient across the membrane. The gamma chain is believed to be important in regulating ATPase activity and the flow of protons through the CF(0) complex. The polypeptide is ATP synthase gamma chain (Janthinobacterium sp. (strain Marseille) (Minibacterium massiliensis)).